The sequence spans 695 residues: Translation initiation factor IF-2 (695 aa).

Positions 60–92 (KKSASSKKKTEKEVEEEEIETPKKKKKQEEKIP) are disordered. One can recognise a tr-type G domain in the interval 184–358 (QRPPVVTVMG…EMSEIKCIPT (175 aa)). Positions 193–200 (GHVDHGKT) are G1. 193-200 (GHVDHGKT) contributes to the GTP binding site. Positions 218-222 (GITQS) are G2. Residues 239–242 (DTPG) are G3. Residues 239-243 (DTPGH) and 293-296 (NKID) each bind GTP. The tract at residues 293–296 (NKID) is G4. Positions 330–332 (SAK) are G5.

The protein belongs to the TRAFAC class translation factor GTPase superfamily. Classic translation factor GTPase family. IF-2 subfamily.

The protein localises to the cytoplasm. One of the essential components for the initiation of protein synthesis. Protects formylmethionyl-tRNA from spontaneous hydrolysis and promotes its binding to the 30S ribosomal subunits. Also involved in the hydrolysis of GTP during the formation of the 70S ribosomal complex. This Kosmotoga olearia (strain ATCC BAA-1733 / DSM 21960 / TBF 19.5.1) protein is Translation initiation factor IF-2.